The following is a 289-amino-acid chain: MAATFFGEVVKAPCRAGTEEEEEEEEQSRRDTPEDREVRRQLARKREVRLLRRQTETSLEAVLLETHPCSKFIIAVGSNATAFLSAFVMNSGVWEEVGCAKLWNEWCRTTDTVRLSPTDVFCVFYQLKSDPSVFLCQCSCYIAEDQQFQWLEKVFGFQPRKSMQVTVLTCRHITDYKTPESTCSLSSPFLRALKTQTFKDALCCPLLEQPNIVHDLSAAVLSYCQVWKIPAVLYLCYTDVMKLDRVTVEAFKPLLSSRSLKCLVKNIPESTEILKKLMTTNEIQSNIYT.

The disordered stretch occupies residues Met-1–Val-38. N-acetylalanine is present on Ala-2. The residue at position 18 (Thr-18) is a Phosphothreonine. Positions Gln-27–Val-38 are enriched in basic and acidic residues. Thr-55 is modified (phosphothreonine). Residue Ser-181 is modified to Phosphoserine. Lys-265 bears the N6-acetyllysine mark.

Belongs to the PSMG1 family. Forms a heterodimer with PSMG2. The PSMG1-PSMG2 heterodimer interacts directly with the PSMA5 and PSMA7 proteasome alpha subunits. In terms of processing, degraded by the proteasome upon completion of 20S proteasome maturation. In terms of tissue distribution, highly expressed in testis with moderate expression in brain, liver and kidney and low levels in heart, skeletal muscle and pancreas.

Its subcellular location is the cytoplasm. It localises to the endoplasmic reticulum. Chaperone protein which promotes assembly of the 20S proteasome as part of a heterodimer with PSMG2. The PSMG1-PSMG2 heterodimer binds to the PSMA5 and PSMA7 proteasome subunits, promotes assembly of the proteasome alpha subunits into the heteroheptameric alpha ring and prevents alpha ring dimerization. The sequence is that of Proteasome assembly chaperone 1 from Mus musculus (Mouse).